The following is an 86-amino-acid chain: BolA-like protein 2 (86 aa).

M1 bears the N-acetylmethionine mark.

This sequence belongs to the BolA/IbaG family. In terms of assembly, interacts with GLRX3; forms a heterotrimeric complex composed by two BOLA2 molecules and one GLRX3 molecule; linked by [2Fe-2S] clusters.

Its subcellular location is the cytoplasm. It localises to the nucleus. Acts as a cytosolic iron-sulfur (Fe-S) cluster assembly factor that facilitates [2Fe-2S] cluster insertion into a subset of cytosolic proteins. Acts together with the monothiol glutaredoxin GLRX3. The chain is BolA-like protein 2 (BOLA2) from Homo sapiens (Human).